Consider the following 461-residue polypeptide: GTPase Der (461 aa).

2 EngA-type G domains span residues 25 to 188 (PVVA…PNVA) and 198 to 371 (RRVA…ASWD). GTP is bound by residues 31–38 (GRPNVGKS), 78–82 (DTGGW), 140–143 (NKVD), 204–211 (GKPNVGKS), 251–255 (DTAGL), and 316–319 (NKWD). The KH-like domain occupies 372 to 454 (TRIATGPLNI…PIRINVRVRE (83 aa)).

The protein belongs to the TRAFAC class TrmE-Era-EngA-EngB-Septin-like GTPase superfamily. EngA (Der) GTPase family. Associates with the 50S ribosomal subunit.

Functionally, GTPase that plays an essential role in the late steps of ribosome biogenesis. This Mycobacterium leprae (strain TN) protein is GTPase Der.